Here is a 263-residue protein sequence, read N- to C-terminus: Shikimate dehydrogenase (NADP(+)) (263 aa).

Shikimate is bound by residues 16 to 18 and threonine 65; that span reads SKS. Lysine 69 serves as the catalytic Proton acceptor. Shikimate contacts are provided by asparagine 90 and aspartate 105. NADP(+)-binding positions include 125-129 and leucine 208; that span reads GSGGS. Tyrosine 210 serves as a coordination point for shikimate. Glycine 230 lines the NADP(+) pocket.

Belongs to the shikimate dehydrogenase family. As to quaternary structure, homodimer.

The enzyme catalyses shikimate + NADP(+) = 3-dehydroshikimate + NADPH + H(+). It functions in the pathway metabolic intermediate biosynthesis; chorismate biosynthesis; chorismate from D-erythrose 4-phosphate and phosphoenolpyruvate: step 4/7. In terms of biological role, involved in the biosynthesis of the chorismate, which leads to the biosynthesis of aromatic amino acids. Catalyzes the reversible NADPH linked reduction of 3-dehydroshikimate (DHSA) to yield shikimate (SA). In Helicobacter acinonychis (strain Sheeba), this protein is Shikimate dehydrogenase (NADP(+)).